A 405-amino-acid polypeptide reads, in one-letter code: Argininosuccinate synthase (405 aa).

ATP is bound by residues 10–18 (AYSGGVDTS) and Ala-38. Tyr-89 lines the L-citrulline pocket. Gly-119 is an ATP binding site. Residues Thr-121, Asn-125, and Asp-126 each coordinate L-aspartate. Asn-125 lines the L-citrulline pocket. Residues Arg-129, Ser-177, Ser-186, Glu-262, and Tyr-274 each coordinate L-citrulline.

Belongs to the argininosuccinate synthase family. Type 1 subfamily. Homotetramer.

The protein localises to the cytoplasm. It catalyses the reaction L-citrulline + L-aspartate + ATP = 2-(N(omega)-L-arginino)succinate + AMP + diphosphate + H(+). The protein operates within amino-acid biosynthesis; L-arginine biosynthesis; L-arginine from L-ornithine and carbamoyl phosphate: step 2/3. The protein is Argininosuccinate synthase of Synechococcus sp. (strain RCC307).